Reading from the N-terminus, the 483-residue chain is Wax ester synthase/diacylglycerol acyltransferase 10 (483 aa).

At 1–203 (MTKEEVEEEP…SINAVYYAVR (203 aa)) the chain is on the cytoplasmic side. Catalysis depends on His143, which acts as the Proton acceptor. A helical transmembrane segment spans residues 204-222 (LIWNTIVDLLLLWATSLFF). The Lumenal segment spans residues 223–483 (KDTETPISEG…MKDTLSGKSD (261 aa)). 2 N-linked (GlcNAc...) asparagine glycosylation sites follow: Asn394 and Asn399.

It in the N-terminal section; belongs to the long-chain O-acyltransferase family. Mostly expressed in roots.

It localises to the cell membrane. It is found in the endoplasmic reticulum membrane. It carries out the reaction an acyl-CoA + a 1,2-diacyl-sn-glycerol = a triacyl-sn-glycerol + CoA. The catalysed reaction is a long chain fatty alcohol + a fatty acyl-CoA = a wax ester + CoA. It participates in glycerolipid metabolism; triacylglycerol biosynthesis. The protein operates within lipid metabolism. Bifunctional wax ester synthase/diacylglycerol acyltransferase. Involved in cuticular wax biosynthesis. This Arabidopsis thaliana (Mouse-ear cress) protein is Wax ester synthase/diacylglycerol acyltransferase 10.